The following is a 240-amino-acid chain: ATP-dependent dethiobiotin synthetase BioD (240 aa).

Residue Glu15 to Phe20 participates in ATP binding. Thr19 is a binding site for Mg(2+). The active site involves Lys40. ATP is bound by residues Asp57, Glu118–Gly121, and Asn178–Arg179. Asp57 and Glu118 together coordinate Mg(2+).

The protein belongs to the dethiobiotin synthetase family. In terms of assembly, homodimer. Mg(2+) is required as a cofactor.

It is found in the cytoplasm. It catalyses the reaction (7R,8S)-7,8-diammoniononanoate + CO2 + ATP = (4R,5S)-dethiobiotin + ADP + phosphate + 3 H(+). Its pathway is cofactor biosynthesis; biotin biosynthesis; biotin from 7,8-diaminononanoate: step 1/2. Its function is as follows. Catalyzes a mechanistically unusual reaction, the ATP-dependent insertion of CO2 between the N7 and N8 nitrogen atoms of 7,8-diaminopelargonic acid (DAPA, also called 7,8-diammoniononanoate) to form a ureido ring. The protein is ATP-dependent dethiobiotin synthetase BioD of Burkholderia pseudomallei (strain K96243).